The chain runs to 1002 residues: MWRYISKQAYSRKFRNSHDSALLGFSQYSSSFGKTRPLQCLCEESTTNPNLGLSQNSIFSRISRKVRHLEGICEESSKNPHLGLSQNSLFSSVKGDFRVCGKRGSGSLGFLRSYGSAAEAIASTSEEDIDEIQELIEEMNKENEALKTNLQPKQPKTIGGMGVGKYNLLRRRQIKVETEAWEEAAKEYQELLMDMCEQKLAPNLPYMKSLFLGWFEPLRDAIAAEQKLCDEGKNRGAYAPFFDQLPAEMMAVITMHKLMGLLMTGGGTGSARVVQAASHIGEAIEHEARIHRFLEKTKKSNALSGDLEDTPGDIMKERERVRKKVKILMKKQKLQQVRKIVKQQDDEKPWGQDNLVKVGCRLIQILMETAYIQPPNDQLDDCPPDIRPAFVHTLKTVETMKGSRRYGVIQCDPLVRKGLDKTARHMVIPYMPMLVPPQSWLGYDKGAYLFLPSYIMRTHGAKQQREAVKRVPKKQLEPVFQALDTLGNTKWRLNRKVLGIVDRIWASGGRLADLVDREDVPLPEEPDAEDEAQIRKWKWKVKGVKKENCERHSQRCDIELKLAVARKMKDEDGFYYPHNLDFRGRAYPMHPYLNHLGSDLCRGILEFAEGRPLGKSGLRWLKIHLANVYGGGVDKLSYEGRVAFSENHVEDIFDSAERPLEGKRWWLGAEDPFQCLATCINIAEALRSPSPETAISYMPIHQDGSCNGLQHYAALGRDTLGAAAVNLVAGDKPADVYSGIAARVLDIMKRDAAKDPANDPNVMRARLLINQVDRKLVKQTVMTSVYGVTYIGARDQIKRRLKERGVIEDDNELFAAACYAAKTTLTALGEMFEAARSIMSWLGDCAKIIAMENHPVRWTTPLGLPVVQPYRKLGRHLIKTSLQILTLQRETDKVMVKRQRTAFPPNFVHSLDGSHMMMTAIACKESGLSFAGVHDSYWTHASDVDQMNKILREKFVELYDAPILENLLESFQQSFPDLQFPPLPERGDFDLREVLESPYFFN.

Residues 1–21 (MWRYISKQAYSRKFRNSHDSA) constitute a mitochondrion transit peptide. Residues aspartate 703, lysine 778, and aspartate 935 contribute to the active site.

This sequence belongs to the phage and mitochondrial RNA polymerase family. In terms of tissue distribution, the highest levels of expression are detected in the mature leaves. The level of expression is lowest in the cotyledons.

Its subcellular location is the mitochondrion. It carries out the reaction RNA(n) + a ribonucleoside 5'-triphosphate = RNA(n+1) + diphosphate. Functionally, DNA-dependent RNA polymerase catalyzes the transcription of DNA into RNA using the four ribonucleoside triphosphates as substrates. This Nicotiana sylvestris (Wood tobacco) protein is DNA-directed RNA polymerase 1, mitochondrial (RPOT1).